Consider the following 207-residue polypeptide: Urease accessory protein UreG (207 aa).

Residue 12-19 participates in GTP binding; the sequence is GPVGAGKT.

Belongs to the SIMIBI class G3E GTPase family. UreG subfamily. Homodimer. UreD, UreF and UreG form a complex that acts as a GTP-hydrolysis-dependent molecular chaperone, activating the urease apoprotein by helping to assemble the nickel containing metallocenter of UreC. The UreE protein probably delivers the nickel.

The protein localises to the cytoplasm. In terms of biological role, facilitates the functional incorporation of the urease nickel metallocenter. This process requires GTP hydrolysis, probably effectuated by UreG. The sequence is that of Urease accessory protein UreG from Cereibacter sphaeroides (strain KD131 / KCTC 12085) (Rhodobacter sphaeroides).